The following is a 71-amino-acid chain: Exodeoxyribonuclease 7 small subunit (71 aa).

Belongs to the XseB family. As to quaternary structure, heterooligomer composed of large and small subunits.

The protein localises to the cytoplasm. It carries out the reaction Exonucleolytic cleavage in either 5'- to 3'- or 3'- to 5'-direction to yield nucleoside 5'-phosphates.. Functionally, bidirectionally degrades single-stranded DNA into large acid-insoluble oligonucleotides, which are then degraded further into small acid-soluble oligonucleotides. This Streptococcus thermophilus (strain ATCC BAA-250 / LMG 18311) protein is Exodeoxyribonuclease 7 small subunit.